Reading from the N-terminus, the 117-residue chain is Large ribosomal subunit protein bL19 (117 aa).

It belongs to the bacterial ribosomal protein bL19 family.

In terms of biological role, this protein is located at the 30S-50S ribosomal subunit interface and may play a role in the structure and function of the aminoacyl-tRNA binding site. In Shewanella sediminis (strain HAW-EB3), this protein is Large ribosomal subunit protein bL19.